The sequence spans 233 residues: Small ribosomal subunit protein uS2 (233 aa).

Belongs to the universal ribosomal protein uS2 family.

The sequence is that of Small ribosomal subunit protein uS2 from Clostridium botulinum (strain Eklund 17B / Type B).